The sequence spans 118 residues: Large ribosomal subunit protein bL20 (118 aa).

Belongs to the bacterial ribosomal protein bL20 family.

Its function is as follows. Binds directly to 23S ribosomal RNA and is necessary for the in vitro assembly process of the 50S ribosomal subunit. It is not involved in the protein synthesizing functions of that subunit. The polypeptide is Large ribosomal subunit protein bL20 (Shigella flexneri serotype 5b (strain 8401)).